The primary structure comprises 91 residues: MKIRAIVTIKGLVQGVAFRHHTVQQAQRLGVSGWVKNLAGGDVQGCFEGEEEAVDALVAWCHHGPSRARVDRVILEREHYRGEFDDFDVRY.

The region spanning 4-91 (RAIVTIKGLV…GEFDDFDVRY (88 aa)) is the Acylphosphatase-like domain. Catalysis depends on residues Arg-19 and Asn-37.

The protein belongs to the acylphosphatase family.

It catalyses the reaction an acyl phosphate + H2O = a carboxylate + phosphate + H(+). This is Acylphosphatase (acyP) from Geobacter sulfurreducens (strain ATCC 51573 / DSM 12127 / PCA).